A 369-amino-acid chain; its full sequence is Probable dual-specificity RNA methyltransferase RlmN (369 aa).

The active-site Proton acceptor is Glu-108. One can recognise a Radical SAM core domain in the interval 114-351; sequence YPDRATLCIS…LAQGVSCTVR (238 aa). Cys-121 and Cys-362 are disulfide-bonded. [4Fe-4S] cluster-binding residues include Cys-128, Cys-132, and Cys-135. S-adenosyl-L-methionine-binding positions include 183-184, Ser-217, 240-242, and Asn-319; these read GE and SLH. Catalysis depends on Cys-362, which acts as the S-methylcysteine intermediate.

It belongs to the radical SAM superfamily. RlmN family. Requires [4Fe-4S] cluster as cofactor.

It localises to the cytoplasm. The enzyme catalyses adenosine(2503) in 23S rRNA + 2 reduced [2Fe-2S]-[ferredoxin] + 2 S-adenosyl-L-methionine = 2-methyladenosine(2503) in 23S rRNA + 5'-deoxyadenosine + L-methionine + 2 oxidized [2Fe-2S]-[ferredoxin] + S-adenosyl-L-homocysteine. It catalyses the reaction adenosine(37) in tRNA + 2 reduced [2Fe-2S]-[ferredoxin] + 2 S-adenosyl-L-methionine = 2-methyladenosine(37) in tRNA + 5'-deoxyadenosine + L-methionine + 2 oxidized [2Fe-2S]-[ferredoxin] + S-adenosyl-L-homocysteine. Functionally, specifically methylates position 2 of adenine 2503 in 23S rRNA and position 2 of adenine 37 in tRNAs. This Rhodococcus opacus (strain B4) protein is Probable dual-specificity RNA methyltransferase RlmN.